Consider the following 212-residue polypeptide: Adenylate kinase (212 aa).

ATP is bound at residue 10 to 15 (GAGKGT). The interval 30-59 (STGDMFRAAMANQTEMGRLAKSYIDKGELV) is NMP. AMP contacts are provided by residues threonine 31, arginine 36, 57–59 (ELV), 86–89 (GYPR), and glutamine 93. The tract at residues 127–159 (GRIINRKTGETFHKVFNPPVDYKEEDYYQREDD) is LID. Residues arginine 128 and 137–138 (TF) each bind ATP. Residues arginine 156 and arginine 167 each coordinate AMP. Glutamine 195 is an ATP binding site.

The protein belongs to the adenylate kinase family. As to quaternary structure, monomer.

The protein resides in the cytoplasm. The enzyme catalyses AMP + ATP = 2 ADP. The protein operates within purine metabolism; AMP biosynthesis via salvage pathway; AMP from ADP: step 1/1. Its function is as follows. Catalyzes the reversible transfer of the terminal phosphate group between ATP and AMP. Plays an important role in cellular energy homeostasis and in adenine nucleotide metabolism. In Streptococcus pyogenes serotype M12 (strain MGAS2096), this protein is Adenylate kinase.